Reading from the N-terminus, the 151-residue chain is ALK and LTK ligand 2 (151 aa).

Residues M1–A25 form the signal peptide. Disulfide bonds link C112–C148 and C126–C135.

The protein belongs to the ALKAL family. In terms of assembly, homodimer.

The protein localises to the secreted. It localises to the cell membrane. Functionally, cytokine that acts as a physiological ligand for receptor tyrosine kinases LTK and ALK, leading to their activation. Cytokine-binding is sufficient to activate LTK. In contrast, ALKAL2-driven activation of ALK is coupled with heparin-binding to ALK. Stimulation of ALK signaling is involved in neural development and regulation of energy expenditure. This is ALK and LTK ligand 2 from Rattus norvegicus (Rat).